We begin with the raw amino-acid sequence, 367 residues long: Heme A synthase (367 aa).

Transmembrane regions (helical) follow at residues 25–45 (AIRIWLGCVLLALFALVLVGG), 111–131 (FLARAMGVIFGVPLLFFVLTG), 137–157 (LWLPLGGIFLLGGLQGAIGWW), 174–194 (LATHLVTACLIFASCMWFMRA), and 211–231 (LAGLIAFMSLFQIYLGALVAG). Heme is bound at residue His274. 3 helical membrane-spanning segments follow: residues 276–296 (LGAYALFAVVAVNMIISLRAA), 305–325 (SVVLFVLVLIQAILGITTLLL), and 327–347 (VPLHLALTHQAGALIVFGFAI). His335 is a binding site for heme.

Belongs to the COX15/CtaA family. Type 2 subfamily. In terms of assembly, interacts with CtaB. Requires heme b as cofactor.

It is found in the cell membrane. The enzyme catalyses Fe(II)-heme o + 2 A + H2O = Fe(II)-heme a + 2 AH2. The protein operates within porphyrin-containing compound metabolism; heme A biosynthesis; heme A from heme O: step 1/1. In terms of biological role, catalyzes the conversion of heme O to heme A by two successive hydroxylations of the methyl group at C8. The first hydroxylation forms heme I, the second hydroxylation results in an unstable dihydroxymethyl group, which spontaneously dehydrates, resulting in the formyl group of heme A. In Rhizobium rhizogenes (strain K84 / ATCC BAA-868) (Agrobacterium radiobacter), this protein is Heme A synthase.